We begin with the raw amino-acid sequence, 193 residues long: 7-methyl-GTP pyrophosphatase (193 aa).

The Proton acceptor role is filled by D70.

Belongs to the Maf family. YceF subfamily. It depends on a divalent metal cation as a cofactor.

It localises to the cytoplasm. The enzyme catalyses N(7)-methyl-GTP + H2O = N(7)-methyl-GMP + diphosphate + H(+). Nucleoside triphosphate pyrophosphatase that hydrolyzes 7-methyl-GTP (m(7)GTP). May have a dual role in cell division arrest and in preventing the incorporation of modified nucleotides into cellular nucleic acids. This chain is 7-methyl-GTP pyrophosphatase, found in Vibrio cholerae serotype O1 (strain ATCC 39315 / El Tor Inaba N16961).